Reading from the N-terminus, the 478-residue chain is Nuclear distribution protein PAC1 (478 aa).

In terms of domain architecture, LisH spans 9–41 (QAEELHKAMIAYLLSANLPKSAAALREELADSV). Residues 60-87 (TSVVRLQKKIMDLESRNNALQSELDSAT) are a coiled coil. 8 WD repeats span residues 113-154 (SHRE…RTIK), 156-196 (HTKA…KNIR), 200-247 (GHDH…CVKT), 250-289 (GHVD…TKST), 292-352 (GHEH…IKTL), 354-393 (GHDN…KCVR), 398-439 (AHGH…AASA), and 440-477 (INGV…RVFA).

This sequence belongs to the WD repeat LIS1/nudF family. Self-associates. Interacts with NDL1 and dynein.

It localises to the cytoplasm. The protein resides in the cytoskeleton. It is found in the spindle pole. Its function is as follows. Positively regulates the activity of the minus-end directed microtubule motor protein dynein. May enhance dynein-mediated microtubule sliding by targeting dynein to the microtubule plus end. Required for nuclear migration during vegetative growth as well as development. Required for retrograde early endosome (EE) transport from the hyphal tip. Required for localization of dynein to the mitotic spindle poles. Recruits additional proteins to the dynein complex at SPBs. The polypeptide is Nuclear distribution protein PAC1 (Paracoccidioides brasiliensis (strain Pb18)).